A 378-amino-acid polypeptide reads, in one-letter code: Glutamate 5-kinase (378 aa).

K20 serves as a coordination point for ATP. S60, D147, and N159 together coordinate substrate. Residues 179-180 (TD) and 221-227 (TGGMLTK) each bind ATP. The 79-residue stretch at 286 to 364 (RGRVVLDDGA…SQIARILGSM (79 aa)) folds into the PUA domain.

Belongs to the glutamate 5-kinase family.

The protein localises to the cytoplasm. It catalyses the reaction L-glutamate + ATP = L-glutamyl 5-phosphate + ADP. It participates in amino-acid biosynthesis; L-proline biosynthesis; L-glutamate 5-semialdehyde from L-glutamate: step 1/2. Catalyzes the transfer of a phosphate group to glutamate to form L-glutamate 5-phosphate. This chain is Glutamate 5-kinase, found in Bordetella parapertussis (strain 12822 / ATCC BAA-587 / NCTC 13253).